Here is a 294-residue protein sequence, read N- to C-terminus: MNTSSQFQQLEKLGEGTYATVYKGRNRTTGQLVALKEINLDSEEGTPSTAIREISLMKELKHENIVTLYDVIHTENKLNLVFEYMDKDLKKFMDTNGNKGALETKQVKWFMYQLLRGILFCHDNRVLHRDLKPQNLLINAKGQLKLADFGLARAFGIPVNTFSNEVVTLWYRAPDVLLGSRTYSTSIDIWSAGCIMAEMFTGRPLFPGSSNDDQLQHIFKLMGTPNESTWPNISSLPNYRSNFQVYAPQDLRVIIPQIDNVALDLLLSLLQLKPENRITARQSLEHPWFAEYHQ.

Positions 7-289 (FQQLEKLGEG…ARQSLEHPWF (283 aa)) constitute a Protein kinase domain. ATP contacts are provided by residues 13-21 (LGEGTYATV) and Lys-36. The active-site Proton acceptor is Asp-130.

The protein belongs to the protein kinase superfamily. CMGC Ser/Thr protein kinase family. CDC2/CDKX subfamily. In terms of assembly, interacts with a number of cyclins.

It catalyses the reaction L-seryl-[protein] + ATP = O-phospho-L-seryl-[protein] + ADP + H(+). The catalysed reaction is L-threonyl-[protein] + ATP = O-phospho-L-threonyl-[protein] + ADP + H(+). Its function is as follows. When phosphate concentrations are high it phosphorylates the PHO4 transcription factor thus establishing repression. This Yarrowia lipolytica (strain CLIB 122 / E 150) (Yeast) protein is Negative regulator of the PHO system (PHO85).